The following is a 437-amino-acid chain: GTPase Obg (437 aa).

The 159-residue stretch at 2 to 160 (SMFLDTAKIS…RQLELELKIL (159 aa)) folds into the Obg domain. Residues 161 to 338 (ADVGLVGFPS…LLEATAELLA (178 aa)) enclose the OBG-type G domain. GTP-binding positions include 167–174 (GFPSVGKS), 192–196 (FTTIV), 214–217 (DLPG), 284–287 (NKMD), and 319–321 (SSL). Positions 174 and 194 each coordinate Mg(2+). The region spanning 359–437 (GFAETEKDFE…IGKFEFEFVD (79 aa)) is the OCT domain.

Belongs to the TRAFAC class OBG-HflX-like GTPase superfamily. OBG GTPase family. In terms of assembly, monomer. The cofactor is Mg(2+).

It localises to the cytoplasm. Functionally, an essential GTPase which binds GTP, GDP and possibly (p)ppGpp with moderate affinity, with high nucleotide exchange rates and a fairly low GTP hydrolysis rate. Plays a role in control of the cell cycle, stress response, ribosome biogenesis and in those bacteria that undergo differentiation, in morphogenesis control. In Streptococcus pyogenes serotype M1, this protein is GTPase Obg.